The chain runs to 350 residues: Serine-threonine kinase receptor-associated protein (350 aa).

WD repeat units lie at residues 12–56 (GHTR…GTFL), 57–96 (GHKG…ELMT), 98–137 (AHKH…AEPK), 141–179 (GHTS…EVKS), 180–212 (LNFN…HSAV), 221–262 (EAPA…ESYK), and 263–302 (GHFG…TYGL). S312, S335, and S338 each carry phosphoserine. The disordered stretch occupies residues 327-350 (EEELEEIASENSDSIYSSTPEVKA). A compositionally biased stretch (polar residues) spans 337–350 (NSDSIYSSTPEVKA). Y342 is modified (phosphotyrosine).

This sequence belongs to the WD repeat STRAP family. In terms of assembly, part of the core SMN complex that contains SMN1, GEMIN2/SIP1, DDX20/GEMIN3, GEMIN4, GEMIN5, GEMIN6, GEMIN7, GEMIN8 and STRAP/UNRIP. Part of the SMN-Sm complex that contains SMN1, GEMIN2/SIP1, DDX20/GEMIN3, GEMIN4, GEMIN5, GEMIN6, GEMIN7, GEMIN8, STRAP/UNRIP and the Sm proteins SNRPB, SNRPD1, SNRPD2, SNRPD3, SNRPE, SNRPF and SNRPG. Interacts directly with GEMIN6 and GEMIN7. Associates with the SMN complex in the cytoplasm but not in the nucleus. Also interacts with CSDE1/UNR and MAWBP. Interacts with PDPK1. Interacts with TRIM48.

It is found in the cytoplasm. The protein localises to the nucleus. Functionally, the SMN complex catalyzes the assembly of small nuclear ribonucleoproteins (snRNPs), the building blocks of the spliceosome, and thereby plays an important role in the splicing of cellular pre-mRNAs. Most spliceosomal snRNPs contain a common set of Sm proteins SNRPB, SNRPD1, SNRPD2, SNRPD3, SNRPE, SNRPF and SNRPG that assemble in a heptameric protein ring on the Sm site of the small nuclear RNA to form the core snRNP (Sm core). In the cytosol, the Sm proteins SNRPD1, SNRPD2, SNRPE, SNRPF and SNRPG are trapped in an inactive 6S pICln-Sm complex by the chaperone CLNS1A that controls the assembly of the core snRNP. To assemble core snRNPs, the SMN complex accepts the trapped 5Sm proteins from CLNS1A forming an intermediate. Binding of snRNA inside 5Sm triggers eviction of the SMN complex, thereby allowing binding of SNRPD3 and SNRPB to complete assembly of the core snRNP. STRAP plays a role in the cellular distribution of the SMN complex. Negatively regulates TGF-beta signaling but positively regulates the PDPK1 kinase activity by enhancing its autophosphorylation and by significantly reducing the association of PDPK1 with 14-3-3 protein. The sequence is that of Serine-threonine kinase receptor-associated protein (STRAP) from Bos taurus (Bovine).